Reading from the N-terminus, the 113-residue chain is Large ribosomal subunit protein bL19 (113 aa).

Belongs to the bacterial ribosomal protein bL19 family.

Its function is as follows. This protein is located at the 30S-50S ribosomal subunit interface and may play a role in the structure and function of the aminoacyl-tRNA binding site. The polypeptide is Large ribosomal subunit protein bL19 (rplS) (Mycobacterium bovis (strain ATCC BAA-935 / AF2122/97)).